Consider the following 210-residue polypeptide: Putative 3-methyladenine DNA glycosylase (210 aa).

The protein belongs to the DNA glycosylase MPG family.

The sequence is that of Putative 3-methyladenine DNA glycosylase from Corynebacterium glutamicum (strain R).